A 164-amino-acid chain; its full sequence is Ubiquitin-fold modifier-conjugating enzyme 1 (164 aa).

The Glycyl thioester intermediate role is filled by cysteine 116.

Belongs to the ubiquitin-conjugating enzyme family. UFC1 subfamily.

Its function is as follows. E2-like enzyme which forms an intermediate with UFM1 via a thioester linkage. The polypeptide is Ubiquitin-fold modifier-conjugating enzyme 1 (Drosophila persimilis (Fruit fly)).